The following is a 393-amino-acid chain: NAD(P)H-quinone oxidoreductase subunit H, chloroplastic (393 aa).

This sequence belongs to the complex I 49 kDa subunit family. NDH is composed of at least 16 different subunits, 5 of which are encoded in the nucleus.

The protein localises to the plastid. Its subcellular location is the chloroplast thylakoid membrane. It catalyses the reaction a plastoquinone + NADH + (n+1) H(+)(in) = a plastoquinol + NAD(+) + n H(+)(out). The enzyme catalyses a plastoquinone + NADPH + (n+1) H(+)(in) = a plastoquinol + NADP(+) + n H(+)(out). Its function is as follows. NDH shuttles electrons from NAD(P)H:plastoquinone, via FMN and iron-sulfur (Fe-S) centers, to quinones in the photosynthetic chain and possibly in a chloroplast respiratory chain. The immediate electron acceptor for the enzyme in this species is believed to be plastoquinone. Couples the redox reaction to proton translocation, and thus conserves the redox energy in a proton gradient. In Gossypium hirsutum (Upland cotton), this protein is NAD(P)H-quinone oxidoreductase subunit H, chloroplastic.